Here is a 358-residue protein sequence, read N- to C-terminus: Chorismate synthase (358 aa).

Arg-47 contacts NADP(+). FMN contacts are provided by residues 124-126 (RSS), 240-241 (NA), Gly-284, 299-303 (KPVAT), and Arg-325.

The protein belongs to the chorismate synthase family. Homotetramer. Requires FMNH2 as cofactor.

The enzyme catalyses 5-O-(1-carboxyvinyl)-3-phosphoshikimate = chorismate + phosphate. The protein operates within metabolic intermediate biosynthesis; chorismate biosynthesis; chorismate from D-erythrose 4-phosphate and phosphoenolpyruvate: step 7/7. Functionally, catalyzes the anti-1,4-elimination of the C-3 phosphate and the C-6 proR hydrogen from 5-enolpyruvylshikimate-3-phosphate (EPSP) to yield chorismate, which is the branch point compound that serves as the starting substrate for the three terminal pathways of aromatic amino acid biosynthesis. This reaction introduces a second double bond into the aromatic ring system. This is Chorismate synthase from Bacteroides fragilis (strain YCH46).